A 320-amino-acid polypeptide reads, in one-letter code: Beta-ketoacyl-[acyl-carrier-protein] synthase III (320 aa).

Residues Cys114 and His247 contribute to the active site. The tract at residues 248–252 (QANRR) is ACP-binding. Asn277 is an active-site residue.

This sequence belongs to the thiolase-like superfamily. FabH family. Homodimer.

Its subcellular location is the cytoplasm. It carries out the reaction malonyl-[ACP] + acetyl-CoA + H(+) = 3-oxobutanoyl-[ACP] + CO2 + CoA. It functions in the pathway lipid metabolism; fatty acid biosynthesis. Functionally, catalyzes the condensation reaction of fatty acid synthesis by the addition to an acyl acceptor of two carbons from malonyl-ACP. Catalyzes the first condensation reaction which initiates fatty acid synthesis and may therefore play a role in governing the total rate of fatty acid production. Possesses both acetoacetyl-ACP synthase and acetyl transacylase activities. Its substrate specificity determines the biosynthesis of branched-chain and/or straight-chain of fatty acids. The polypeptide is Beta-ketoacyl-[acyl-carrier-protein] synthase III (Neisseria meningitidis serogroup A / serotype 4A (strain DSM 15465 / Z2491)).